A 290-amino-acid polypeptide reads, in one-letter code: MSWLDKLLPPKIKQTDPKSRKGIPEGLWIKCPSCEAVLYRNDVEANLHVCPKCDHHMRIGARERLDGLLDPEGRYEIGQEILPVDALKFKDSRKYPDRLKEAMDETDETDAMVVMGGAIHTLPVVVACFEFAFMGGSMGSVVGERFARGAQNALEQNVPFICFTASGGARMQESLLSLMQMAKTTAMLTKLSEAKLPFISVLTDPTMGGVSASFAFLGDVVIAEPKALIGFAGPRVIEQTVREKLPEGFQRAEFLLQKGAIDMIVDRRKLREELAQLMALLTRQPADAVA.

The region spanning 27–290 is the CoA carboxyltransferase N-terminal domain; the sequence is LWIKCPSCEA…LTRQPADAVA (264 aa). Positions 31, 34, 50, and 53 each coordinate Zn(2+). Residues 31–53 form a C4-type zinc finger; it reads CPSCEAVLYRNDVEANLHVCPKC.

This sequence belongs to the AccD/PCCB family. Acetyl-CoA carboxylase is a heterohexamer composed of biotin carboxyl carrier protein (AccB), biotin carboxylase (AccC) and two subunits each of ACCase subunit alpha (AccA) and ACCase subunit beta (AccD). Requires Zn(2+) as cofactor.

The protein resides in the cytoplasm. It carries out the reaction N(6)-carboxybiotinyl-L-lysyl-[protein] + acetyl-CoA = N(6)-biotinyl-L-lysyl-[protein] + malonyl-CoA. The protein operates within lipid metabolism; malonyl-CoA biosynthesis; malonyl-CoA from acetyl-CoA: step 1/1. Functionally, component of the acetyl coenzyme A carboxylase (ACC) complex. Biotin carboxylase (BC) catalyzes the carboxylation of biotin on its carrier protein (BCCP) and then the CO(2) group is transferred by the transcarboxylase to acetyl-CoA to form malonyl-CoA. The sequence is that of Acetyl-coenzyme A carboxylase carboxyl transferase subunit beta from Paraburkholderia phymatum (strain DSM 17167 / CIP 108236 / LMG 21445 / STM815) (Burkholderia phymatum).